The chain runs to 228 residues: Octanoyltransferase (228 aa).

In terms of domain architecture, BPL/LPL catalytic spans 40 to 225 (GEEAERVWLV…SFERVFDAAP (186 aa)). Residues 79 to 86 (RGGQWTYH), 156 to 158 (AIG), and 169 to 171 (GIA) each bind substrate. The active-site Acyl-thioester intermediate is cysteine 187.

Belongs to the LipB family.

Its subcellular location is the cytoplasm. It catalyses the reaction octanoyl-[ACP] + L-lysyl-[protein] = N(6)-octanoyl-L-lysyl-[protein] + holo-[ACP] + H(+). It participates in protein modification; protein lipoylation via endogenous pathway; protein N(6)-(lipoyl)lysine from octanoyl-[acyl-carrier-protein]: step 1/2. Catalyzes the transfer of endogenously produced octanoic acid from octanoyl-acyl-carrier-protein onto the lipoyl domains of lipoate-dependent enzymes. Lipoyl-ACP can also act as a substrate although octanoyl-ACP is likely to be the physiological substrate. In Acidiphilium cryptum (strain JF-5), this protein is Octanoyltransferase.